The following is a 161-amino-acid chain: Dihydrofolate reductase (161 aa).

Residues 2–161 (NISLIAAISK…YNYSFEILSR (160 aa)) form the DHFR domain. Residue 6–8 (IAA) participates in substrate binding. Residues 7–8 (AA) and 15–20 (IGYKNK) each bind NADP(+). D28 is a substrate binding site. 44–47 (GRLT) contacts NADP(+). R59 is a binding site for substrate. Residues 64 to 66 (ISS) and 96 to 101 (IGGAKI) contribute to the NADP(+) site. A substrate-binding site is contributed by T115.

It belongs to the dihydrofolate reductase family.

The enzyme catalyses (6S)-5,6,7,8-tetrahydrofolate + NADP(+) = 7,8-dihydrofolate + NADPH + H(+). The protein operates within cofactor biosynthesis; tetrahydrofolate biosynthesis; 5,6,7,8-tetrahydrofolate from 7,8-dihydrofolate: step 1/1. Key enzyme in folate metabolism. Catalyzes an essential reaction for de novo glycine and purine synthesis, and for DNA precursor synthesis. The chain is Dihydrofolate reductase (folA) from Buchnera aphidicola subsp. Acyrthosiphon pisum (strain APS) (Acyrthosiphon pisum symbiotic bacterium).